The sequence spans 359 residues: Alanine racemase (359 aa).

Residue Lys-34 is the Proton acceptor; specific for D-alanine of the active site. Lys-34 carries the N6-(pyridoxal phosphate)lysine modification. Arg-129 contributes to the substrate binding site. Residue Tyr-256 is the Proton acceptor; specific for L-alanine of the active site. Met-304 serves as a coordination point for substrate.

This sequence belongs to the alanine racemase family. The cofactor is pyridoxal 5'-phosphate.

The catalysed reaction is L-alanine = D-alanine. It functions in the pathway amino-acid biosynthesis; D-alanine biosynthesis; D-alanine from L-alanine: step 1/1. Functionally, catalyzes the interconversion of L-alanine and D-alanine. May also act on other amino acids. The protein is Alanine racemase (alr) of Photobacterium profundum (strain SS9).